Reading from the N-terminus, the 584-residue chain is Cilia- and flagella-associated protein 184 (584 aa).

Composition is skewed to basic and acidic residues over residues 1–18, 42–57, and 67–82; these read MDSH…EEGL, PEPK…REPE, and SKAK…HVEV. The tract at residues 1-243 is disordered; it reads MDSHYGDIEG…ASTEEFEWTA (243 aa). The span at 119–146 shows a compositional bias: acidic residues; the sequence is DKDEDEDEDEDEDEDEDEDEDEDEDEGE. Basic and acidic residues predominate over residues 189–232; the sequence is AKEKARESLKKRDSEEIEGTDRERHKSTEEQLHPGEAKEEEKQK. Coiled-coil stretches lie at residues 317-470 and 530-561; these read LAML…SNVQ and LLGK…KRHH.

This sequence belongs to the CFAP184 family. Forms a complex with CFAP263; the interaction is required for functional activity in cilia.

The protein resides in the cell projection. It is found in the cilium. It localises to the cytoplasm. Its subcellular location is the cytoskeleton. The protein localises to the microtubule organizing center. The protein resides in the centrosome. Its function is as follows. In complex with CFAP263, acts as a regulator of ciliary beating that connects radial spoke 3 (RS3) to the inner dynein arm (IDA) and the nexin-dynein regulatory complex (N-DRC). The complex is positioned parallel to N-DRC and forms a connection between the arch at the base of RS3, the IDA tail and N-DRC. This chain is Cilia- and flagella-associated protein 184 (Cfap184), found in Mus musculus (Mouse).